The primary structure comprises 137 residues: uncharacterized protein (137 aa).

The helical transmembrane segment at 116 to 136 (YLSIANLATLLLFGIIGLSII) threads the bilayer.

The protein localises to the host membrane. This is an uncharacterized protein from His1 virus (isolate Australia/Victoria) (His1V).